The primary structure comprises 249 residues: Secreted flagellin C (249 aa).

Post-translationally, the secreted form is about 1 kDa larger than the whole cell lysate form, presumably due to post-translational modification. A 22 kDa form is also found in the secreted fraction, probably resulting from proteolysis.

The protein localises to the secreted. It is found in the host cell surface. Functionally, plays a role in virulence. This chain is Secreted flagellin C (flaC), found in Campylobacter jejuni subsp. jejuni serotype O:2 (strain ATCC 700819 / NCTC 11168).